The following is a 638-amino-acid chain: RAF proto-oncogene serine/threonine-protein kinase (638 aa).

S43 carries the phosphoserine modification. Residues S56–L130 form the RBD domain. The Phorbol-ester/DAG-type zinc finger occupies T137–C183. Zn(2+) is bound by residues H138, C151, C154, C164, C167, H172, C175, and C183. Position 257 is a phosphoserine (S257). Phosphothreonine; by autocatalysis is present on T266. Residues L279 to A323 form a disordered region. Residues E284–S297 are compositionally biased toward polar residues. S329 bears the Phosphoserine mark. A Protein kinase domain is found at V340–L600. Residues I346–V354 and K366 each bind ATP. The active-site Proton acceptor is D459. At S490 the chain carries Phosphoserine.

This sequence belongs to the protein kinase superfamily. TKL Ser/Thr protein kinase family. RAF subfamily. It depends on Zn(2+) as a cofactor. Post-translationally, phosphorylation at Ser-257 inactivates kinase activity. Dephosphorylation of Ser-257 by a complex containing protein phosphatase 1 relieves inactivation, leading to stimulate RAF1 activity.

Its subcellular location is the cytoplasm. It is found in the cell membrane. It carries out the reaction L-seryl-[protein] + ATP = O-phospho-L-seryl-[protein] + ADP + H(+). The catalysed reaction is L-threonyl-[protein] + ATP = O-phospho-L-threonyl-[protein] + ADP + H(+). Serine/threonine-protein kinase that acts as a regulatory link between the membrane-associated Ras GTPases and the MAPK/ERK cascade, and this critical regulatory link functions as a switch determining cell fate decisions. RAF1 activation initiates a mitogen-activated protein kinase (MAPK) cascade that comprises a sequential phosphorylation of the dual-specific MAPK kinases (MAP2K1/MEK1 and MAP2K2/MEK2) and the extracellular signal-regulated kinases (MAPK3/ERK1 and MAPK1/ERK2). The chain is RAF proto-oncogene serine/threonine-protein kinase (raf1) from Xenopus laevis (African clawed frog).